A 188-amino-acid chain; its full sequence is Adenine phosphoribosyltransferase (188 aa).

The protein belongs to the purine/pyrimidine phosphoribosyltransferase family. Homodimer.

Its subcellular location is the cytoplasm. It carries out the reaction AMP + diphosphate = 5-phospho-alpha-D-ribose 1-diphosphate + adenine. Its pathway is purine metabolism; AMP biosynthesis via salvage pathway; AMP from adenine: step 1/1. Its function is as follows. Catalyzes a salvage reaction resulting in the formation of AMP, that is energically less costly than de novo synthesis. The sequence is that of Adenine phosphoribosyltransferase from Burkholderia vietnamiensis (strain G4 / LMG 22486) (Burkholderia cepacia (strain R1808)).